A 404-amino-acid polypeptide reads, in one-letter code: MNTGEMKINWVSRYMPLLNKIAEEYSREKPLSGFTVGMSIHLEAKTAYLAITLSKLGAKVVITGSNPLSTQDDVAEALRSKGITVYARRTHDESIYRENLMKVLDERPDFIIDDGGDLTVISHTEREEVLENLKGVSEETTTGVRRLKALEETGKLRVPVIAVNDSKMKYLFDNRYGTGQSTWDAIMRNTNLLVAGKNVVVAGYGWCGRGIALRAAGLGARVIVTEVDPVKAVEAIMDGFTVMPMKEAVKIADFVITASGNTDVLSKEDILSLKDGAVLANAGHFNVEIPVRVLEEIAVEKFEARPNVTGYTLENGKTVFLLAEGRLVNLAAGDGHPVEIMDLSFALQIFAVLYLLENHRKMSPKVYMLPDEIDERVARMKLDSLGVKIDELTEKQRRYLRSWQ.

Positions 114 and 139 each coordinate substrate. 140–142 (TTT) provides a ligand contact to NAD(+). Residues Lys-169 and Asp-173 each contribute to the substrate site. Residues Asn-174, 203–208 (GYGWCG), Glu-226, Asn-261, 282–284 (AGH), and Asn-329 each bind NAD(+).

The protein belongs to the adenosylhomocysteinase family. Requires NAD(+) as cofactor.

It localises to the cytoplasm. The catalysed reaction is S-adenosyl-L-homocysteine + H2O = L-homocysteine + adenosine. The protein operates within amino-acid biosynthesis; L-homocysteine biosynthesis; L-homocysteine from S-adenosyl-L-homocysteine: step 1/1. May play a key role in the regulation of the intracellular concentration of adenosylhomocysteine. The sequence is that of Adenosylhomocysteinase from Thermotoga maritima (strain ATCC 43589 / DSM 3109 / JCM 10099 / NBRC 100826 / MSB8).